Here is a 151-residue protein sequence, read N- to C-terminus: Guanylate kinase homolog (151 aa).

Positions 1–141 constitute a Guanylate kinase-like domain; it reads MEREGVDYHY…AYSKLIQILQ (141 aa).

Belongs to the guanylate kinase family.

The protein is Guanylate kinase homolog of Vaccinia virus (strain Copenhagen) (VACV).